A 239-amino-acid polypeptide reads, in one-letter code: uncharacterized protein (239 aa).

A run of 4 helical transmembrane segments spans residues 9–29, 65–85, 94–114, and 167–187; these read LAIY…SQII, IIYL…YLFI, IILI…TFVV, and IYFA…MHWI.

The protein localises to the cell membrane. This is an uncharacterized protein from Methanocaldococcus jannaschii (strain ATCC 43067 / DSM 2661 / JAL-1 / JCM 10045 / NBRC 100440) (Methanococcus jannaschii).